Reading from the N-terminus, the 123-residue chain is Glycophorin-B (123 aa).

A signal peptide spans 1 to 19 (MYGKIIFVLLLSEIVSISA). Residues 93 to 113 (VVIILIILCVMAGVIGTILLI) traverse the membrane as a helical segment.

Belongs to the glycophorin-A family. In terms of assembly, component of the ankyrin-1 complex in the erythrocyte, composed of ANK1, RHCE, RHAG, SLC4A1, EPB42, GYPA, GYPB and AQP1. Interacts (via the N-terminal) with RHAG; this interaction bridges the (RHAG)2(RHCE) heterotrimer with the SLC4A1 Band 3 I dimer complexed with GYPA. In terms of processing, the N-terminal extracellular domain is heavily glycosylated on serine and threonine residues.

The protein localises to the cell membrane. Functionally, component of the ankyrin-1 complex, a multiprotein complex involved in the stability and shape of the erythrocyte membrane. The polypeptide is Glycophorin-B (Pan troglodytes (Chimpanzee)).